A 194-amino-acid polypeptide reads, in one-letter code: dTTP/UTP pyrophosphatase (194 aa).

Aspartate 66 functions as the Proton acceptor in the catalytic mechanism.

The protein belongs to the Maf family. YhdE subfamily. A divalent metal cation serves as cofactor.

The protein resides in the cytoplasm. It catalyses the reaction dTTP + H2O = dTMP + diphosphate + H(+). It carries out the reaction UTP + H2O = UMP + diphosphate + H(+). Its function is as follows. Nucleoside triphosphate pyrophosphatase that hydrolyzes dTTP and UTP. May have a dual role in cell division arrest and in preventing the incorporation of modified nucleotides into cellular nucleic acids. In Anaeromyxobacter dehalogenans (strain 2CP-C), this protein is dTTP/UTP pyrophosphatase.